The primary structure comprises 539 residues: Chaperonin GroEL (539 aa).

Residues 29–32 (TLGP), 86–90 (DGTTT), G413, 476–478 (NAA), and D492 contribute to the ATP site.

It belongs to the chaperonin (HSP60) family. Forms a cylinder of 14 subunits composed of two heptameric rings stacked back-to-back. Interacts with the co-chaperonin GroES.

It localises to the cytoplasm. It catalyses the reaction ATP + H2O + a folded polypeptide = ADP + phosphate + an unfolded polypeptide.. Together with its co-chaperonin GroES, plays an essential role in assisting protein folding. The GroEL-GroES system forms a nano-cage that allows encapsulation of the non-native substrate proteins and provides a physical environment optimized to promote and accelerate protein folding. In Geobacillus sp. (strain WCH70), this protein is Chaperonin GroEL.